A 520-amino-acid polypeptide reads, in one-letter code: Bifunctional purine biosynthesis protein PurH (520 aa).

The MGS-like domain occupies 1 to 150; the sequence is MSDDRKAIKR…KNHPSVAVVV (150 aa).

Belongs to the PurH family.

The catalysed reaction is (6R)-10-formyltetrahydrofolate + 5-amino-1-(5-phospho-beta-D-ribosyl)imidazole-4-carboxamide = 5-formamido-1-(5-phospho-D-ribosyl)imidazole-4-carboxamide + (6S)-5,6,7,8-tetrahydrofolate. The enzyme catalyses IMP + H2O = 5-formamido-1-(5-phospho-D-ribosyl)imidazole-4-carboxamide. It functions in the pathway purine metabolism; IMP biosynthesis via de novo pathway; 5-formamido-1-(5-phospho-D-ribosyl)imidazole-4-carboxamide from 5-amino-1-(5-phospho-D-ribosyl)imidazole-4-carboxamide (10-formyl THF route): step 1/1. The protein operates within purine metabolism; IMP biosynthesis via de novo pathway; IMP from 5-formamido-1-(5-phospho-D-ribosyl)imidazole-4-carboxamide: step 1/1. This chain is Bifunctional purine biosynthesis protein PurH, found in Corynebacterium glutamicum (strain ATCC 13032 / DSM 20300 / JCM 1318 / BCRC 11384 / CCUG 27702 / LMG 3730 / NBRC 12168 / NCIMB 10025 / NRRL B-2784 / 534).